The following is an 84-amino-acid chain: MSPLAQVLALPVRAYRLLLSPWVGHGCRYQPTCSVYALDALERHGALKGGWLAARRILSCHPWGGSGYDPVPGADPEHDRRPRG.

Residues 63–84 (WGGSGYDPVPGADPEHDRRPRG) form a disordered region. The span at 75 to 84 (DPEHDRRPRG) shows a compositional bias: basic and acidic residues.

Belongs to the UPF0161 family.

It is found in the cell inner membrane. Its function is as follows. Could be involved in insertion of integral membrane proteins into the membrane. The sequence is that of Putative membrane protein insertion efficiency factor from Cereibacter sphaeroides (strain ATCC 17029 / ATH 2.4.9) (Rhodobacter sphaeroides).